Here is a 268-residue protein sequence, read N- to C-terminus: Shikimate dehydrogenase (NADP(+)) (268 aa).

Shikimate is bound by residues 13–15 (SLS) and threonine 60. Residue lysine 64 is the Proton acceptor of the active site. An NADP(+)-binding site is contributed by glutamate 76. 2 residues coordinate shikimate: asparagine 85 and aspartate 100. NADP(+) is bound by residues 124 to 128 (GAGGA), 148 to 153 (NRTMAR), and isoleucine 209. Tyrosine 211 provides a ligand contact to shikimate. Residue glycine 232 coordinates NADP(+).

This sequence belongs to the shikimate dehydrogenase family. Homodimer.

The enzyme catalyses shikimate + NADP(+) = 3-dehydroshikimate + NADPH + H(+). Its pathway is metabolic intermediate biosynthesis; chorismate biosynthesis; chorismate from D-erythrose 4-phosphate and phosphoenolpyruvate: step 4/7. In terms of biological role, involved in the biosynthesis of the chorismate, which leads to the biosynthesis of aromatic amino acids. Catalyzes the reversible NADPH linked reduction of 3-dehydroshikimate (DHSA) to yield shikimate (SA). In Staphylococcus aureus (strain MSSA476), this protein is Shikimate dehydrogenase (NADP(+)).